The following is a 249-amino-acid chain: Major phosphate-irrepressible acid phosphatase (249 aa).

Residues 1–20 form the signal peptide; that stretch reads MKKNIIAGCLFSLFSLSALA.

The protein belongs to the class A bacterial acid phosphatase family. As to quaternary structure, homotetramer.

It is found in the periplasm. The enzyme catalyses a phosphate monoester + H2O = an alcohol + phosphate. The sequence is that of Major phosphate-irrepressible acid phosphatase (phoC) from Morganella morganii (Proteus morganii).